The following is an 800-amino-acid chain: Leukocyte receptor cluster member 8 homolog (800 aa).

5 disordered regions span residues N118–S149, P175–F229, S245–Q273, T335–S394, and K407–G519. 2 stretches are compositionally biased toward low complexity: residues Q120 to G131 and N184 to S201. A compositionally biased stretch (polar residues) spans S252–T261. The segment covering W338–S352 has biased composition (basic and acidic residues). Residues Q360–A387 are compositionally biased toward polar residues. Over residues S409–R418 the composition is skewed to low complexity. Basic residues-rich tracts occupy residues S419–R433 and E508–G519. Residues D636–I800 enclose the PCI domain.

The sequence is that of Leukocyte receptor cluster member 8 homolog (leng8) from Xenopus laevis (African clawed frog).